The primary structure comprises 284 residues: NAD kinase (284 aa).

Asp-65 serves as the catalytic Proton acceptor. NAD(+) contacts are provided by residues 65–66 (DG), 139–140 (ND), Arg-150, Arg-167, Asp-169, and Gln-239.

Belongs to the NAD kinase family. Requires a divalent metal cation as cofactor.

The protein localises to the cytoplasm. The catalysed reaction is NAD(+) + ATP = ADP + NADP(+) + H(+). In terms of biological role, involved in the regulation of the intracellular balance of NAD and NADP, and is a key enzyme in the biosynthesis of NADP. Catalyzes specifically the phosphorylation on 2'-hydroxyl of the adenosine moiety of NAD to yield NADP. The polypeptide is NAD kinase (Desulfatibacillum aliphaticivorans).